The primary structure comprises 151 residues: Large ribosomal subunit protein uL13 (151 aa).

It belongs to the universal ribosomal protein uL13 family. As to quaternary structure, part of the 50S ribosomal subunit.

In terms of biological role, this protein is one of the early assembly proteins of the 50S ribosomal subunit, although it is not seen to bind rRNA by itself. It is important during the early stages of 50S assembly. The sequence is that of Large ribosomal subunit protein uL13 from Synechococcus sp. (strain JA-3-3Ab) (Cyanobacteria bacterium Yellowstone A-Prime).